Consider the following 358-residue polypeptide: Methionine aminopeptidase 2 (358 aa).

Residue H109 coordinates substrate. Residues D130, D141, and H210 each coordinate a divalent metal cation. Residue H218 participates in substrate binding. E243 and E339 together coordinate a divalent metal cation.

This sequence belongs to the peptidase M24A family. Methionine aminopeptidase eukaryotic type 2 subfamily. The cofactor is Co(2+). Zn(2+) is required as a cofactor. Mn(2+) serves as cofactor. It depends on Fe(2+) as a cofactor.

The protein resides in the cytoplasm. The enzyme catalyses Release of N-terminal amino acids, preferentially methionine, from peptides and arylamides.. Cotranslationally removes the N-terminal methionine from nascent proteins. The N-terminal methionine is often cleaved when the second residue in the primary sequence is small and uncharged (Met-Ala-, Cys, Gly, Pro, Ser, Thr, or Val). The polypeptide is Methionine aminopeptidase 2 (Encephalitozoon cuniculi (strain GB-M1) (Microsporidian parasite)).